We begin with the raw amino-acid sequence, 292 residues long: 33 kDa chaperonin (292 aa).

2 disulfide bridges follow: cysteine 236-cysteine 238 and cysteine 269-cysteine 272.

It belongs to the HSP33 family. Post-translationally, under oxidizing conditions two disulfide bonds are formed involving the reactive cysteines. Under reducing conditions zinc is bound to the reactive cysteines and the protein is inactive.

It localises to the cytoplasm. Its function is as follows. Redox regulated molecular chaperone. Protects both thermally unfolding and oxidatively damaged proteins from irreversible aggregation. Plays an important role in the bacterial defense system toward oxidative stress. This chain is 33 kDa chaperonin, found in Ruminiclostridium cellulolyticum (strain ATCC 35319 / DSM 5812 / JCM 6584 / H10) (Clostridium cellulolyticum).